The sequence spans 358 residues: Histidinol-phosphate aminotransferase (358 aa).

Lys-211 bears the N6-(pyridoxal phosphate)lysine mark.

It belongs to the class-II pyridoxal-phosphate-dependent aminotransferase family. Histidinol-phosphate aminotransferase subfamily. In terms of assembly, homodimer. Requires pyridoxal 5'-phosphate as cofactor.

The catalysed reaction is L-histidinol phosphate + 2-oxoglutarate = 3-(imidazol-4-yl)-2-oxopropyl phosphate + L-glutamate. It participates in amino-acid biosynthesis; L-histidine biosynthesis; L-histidine from 5-phospho-alpha-D-ribose 1-diphosphate: step 7/9. The sequence is that of Histidinol-phosphate aminotransferase from Blochmanniella pennsylvanica (strain BPEN).